Reading from the N-terminus, the 343-residue chain is MKTLLKNRELSAFLAILALFGVLVALNPAYLSFQTLGMIFASSQILILLALGAALVMLTRNIDVSVGSTVGLCAIAVGVALNNGYSLPVSMLFALAIGALAGAFNGLLVVGLRIPAIVATLGTLGLYRGAMLLWTGGKWIEGLPSSLKSLSEPVALGVSPLGMAVLFLVLIGAWTLSRTVSGRDFYAVGDNLAAARQLGVAVNRTRMLAFTINGMLAACAGIVFASQIGFVPNQTGSGLEMKAIAACVLGGISLLGGTGTLIGAFLGAFFLTQIDTVLVLFRLPAWWNDFIAGLVLLGVLVLDGRLRQALTRHQRALKYSRFQPGNKGGKHVTPFPKRKKEVA.

The next 9 membrane-spanning stretches (helical) occupy residues 13-33, 38-58, 61-81, 92-112, 114-134, 154-174, 212-232, 251-271, and 283-303; these read FLAILALFGVLVALNPAYLSF, MIFASSQILILLALGAALVML, NIDVSVGSTVGLCAIAVGVAL, LFALAIGALAGAFNGLLVVGL, IPAIVATLGTLGLYRGAMLLW, VALGVSPLGMAVLFLVLIGAW, INGMLAACAGIVFASQIGFVP, GISLLGGTGTLIGAFLGAFFL, and LPAWWNDFIAGLVLLGVLVLD. Residues 321–343 form a disordered region; the sequence is RFQPGNKGGKHVTPFPKRKKEVA.

The protein belongs to the binding-protein-dependent transport system permease family. AraH/RbsC subfamily. The complex is composed of two ATP-binding proteins (LsrA), two transmembrane proteins (LsrC and LsrD) and a solute-binding protein (LsrB).

The protein localises to the cell inner membrane. Its function is as follows. Part of the ABC transporter complex LsrABCD involved in autoinducer 2 (AI-2) import. Probably responsible for the translocation of the substrate across the membrane. The sequence is that of Autoinducer 2 import system permease protein LsrC (lsrC) from Enterobacter sp. (strain 638).